A 238-amino-acid polypeptide reads, in one-letter code: Pyridoxine 5'-phosphate synthase (238 aa).

N7 contacts 3-amino-2-oxopropyl phosphate. 1-deoxy-D-xylulose 5-phosphate is bound at residue 9–10; that stretch reads DH. R18 contributes to the 3-amino-2-oxopropyl phosphate binding site. H43 functions as the Proton acceptor in the catalytic mechanism. 1-deoxy-D-xylulose 5-phosphate contacts are provided by R45 and H50. E70 functions as the Proton acceptor in the catalytic mechanism. A 1-deoxy-D-xylulose 5-phosphate-binding site is contributed by T100. H190 acts as the Proton donor in catalysis. 3-amino-2-oxopropyl phosphate is bound by residues G191 and 212–213; that span reads GH.

It belongs to the PNP synthase family. As to quaternary structure, homooctamer; tetramer of dimers.

Its subcellular location is the cytoplasm. It catalyses the reaction 3-amino-2-oxopropyl phosphate + 1-deoxy-D-xylulose 5-phosphate = pyridoxine 5'-phosphate + phosphate + 2 H2O + H(+). It functions in the pathway cofactor biosynthesis; pyridoxine 5'-phosphate biosynthesis; pyridoxine 5'-phosphate from D-erythrose 4-phosphate: step 5/5. In terms of biological role, catalyzes the complicated ring closure reaction between the two acyclic compounds 1-deoxy-D-xylulose-5-phosphate (DXP) and 3-amino-2-oxopropyl phosphate (1-amino-acetone-3-phosphate or AAP) to form pyridoxine 5'-phosphate (PNP) and inorganic phosphate. This is Pyridoxine 5'-phosphate synthase from Prochlorococcus marinus (strain AS9601).